The following is a 202-amino-acid chain: IMP cyclohydrolase (202 aa).

The protein belongs to the archaeal IMP cyclohydrolase family.

It carries out the reaction IMP + H2O = 5-formamido-1-(5-phospho-D-ribosyl)imidazole-4-carboxamide. It functions in the pathway purine metabolism; IMP biosynthesis via de novo pathway; IMP from 5-formamido-1-(5-phospho-D-ribosyl)imidazole-4-carboxamide: step 1/1. Its function is as follows. Catalyzes the cyclization of 5-formylamidoimidazole-4-carboxamide ribonucleotide to IMP. This chain is IMP cyclohydrolase, found in Methanothermobacter thermautotrophicus (strain ATCC 29096 / DSM 1053 / JCM 10044 / NBRC 100330 / Delta H) (Methanobacterium thermoautotrophicum).